Reading from the N-terminus, the 462-residue chain is Cysteine--tRNA ligase (462 aa).

Cysteine 28 contacts Zn(2+). The 'HIGH' region motif lies at methionine 30 to histidine 40. Zn(2+) is bound by residues cysteine 209, histidine 234, and glutamate 238. Residues lysine 266–serine 270 carry the 'KMSKS' region motif. Lysine 269 contacts ATP.

Belongs to the class-I aminoacyl-tRNA synthetase family. Monomer. The cofactor is Zn(2+).

The protein localises to the cytoplasm. It carries out the reaction tRNA(Cys) + L-cysteine + ATP = L-cysteinyl-tRNA(Cys) + AMP + diphosphate. The polypeptide is Cysteine--tRNA ligase (Alkalilimnicola ehrlichii (strain ATCC BAA-1101 / DSM 17681 / MLHE-1)).